We begin with the raw amino-acid sequence, 167 residues long: Urease accessory protein UreE (167 aa).

Positions 137–158 (EAGAYQSAPHGHSHSHAHGHDH) are disordered.

It belongs to the UreE family.

It is found in the cytoplasm. Its function is as follows. Involved in urease metallocenter assembly. Binds nickel. Probably functions as a nickel donor during metallocenter assembly. In Pseudomonas putida (strain ATCC 700007 / DSM 6899 / JCM 31910 / BCRC 17059 / LMG 24140 / F1), this protein is Urease accessory protein UreE.